The sequence spans 262 residues: Dimeric xanthone biosynthesis cluster protein R11 (262 aa).

Residues I69–E160 form a hemerythrin-like region.

Its pathway is secondary metabolite biosynthesis. Part of the gene cluster that mediates the biosynthesis of the dimeric xanthones cryptosporioptides. The pathway begins with the synthesis of atrochrysone thioester by the polyketide synthase dmx-nrPKS. The atrochrysone carboxyl ACP thioesterase dmxR1 then breaks the thioester bond and releases the atrochrysone carboxylic acid from dmx-nrPKS. Atrochrysone carboxylic acid is decarboxylated by the decarboxylase dmxR15, and oxidized by the anthrone oxygenase dmxR16 to yield emodin. Emodin is then reduced to emodin hydroquinone by the oxidoreductase dmxR7. A-ring reduction by the short chain dehydrogenase dmxR18, dehydration by the scytalone dehydratase-like protein dmxR17 and probable spontaneous re-oxidation, results in overall deoxygenation to chrysophanol. Baeyer-Villiger oxidation by the Baeyer-Villiger monooxygenase (BVMO) dmxR6 then yields monodictylactone in equilibrium with monodictyphenone. In the case of the cryptosporioptides biosynthesis, monodictylactone is reduced at C-12 to an alcohol (by the short chain dehydrogenases dmxR12 or dmxR8) and hydroxylated at C-5 by dmxR9, yielding the electron-rich aromatic which could eliminate H(2)O to form the ortho-quinonemethide, followed by tautomerisation to paraquinone and complete the formal reduction to produce the 10-methylgroup. Conjugate addition of C-4a-OH to the resulting paraquinone by the monooxygenase dmxR10 then gives cyclohexadienone, which is then reduced at C-5 by the short chain dehydrogenase dmxR3 to give the dihydroxanthone. The 6,7-epoxide in the cryptosporioptides could be introduced by the cytochrome P450 monooxygenase dmxL3. The highly reducing PKS dmxL2 manufactures butyrate, which is further carboxylated by dmxL1 to form ethylmalonate. It is not yet clear whether the carboxylation occurs while the butyrate is attached to the ACP of dmxL2, but this unusual fungal metabolite could then be esterified to O-5 by the O-acetyltransferase dmxR13. Finally, dimerization performed by dmxR5 gives the observed dimers cryptosporioptides A, B and C as the final products of the pathway. In Cryptosporiopsis sp. (strain 8999), this protein is Dimeric xanthone biosynthesis cluster protein R11.